We begin with the raw amino-acid sequence, 456 residues long: Methylthioribose-1-phosphate isomerase (456 aa).

Residues 40–113 (KGLVHGGFIF…CFKGEDKVFE (74 aa)) form a thioesterase region. Positions 124 to 456 (MFWRGEKMEV…PERITEALKD (333 aa)) are MTR-1-P isomerase. Residues 176-178 (RGA), Arg-211, and Gln-309 each bind substrate. Asp-350 serves as the catalytic Proton donor. 360 to 361 (NK) serves as a coordination point for substrate.

The protein belongs to the eIF-2B alpha/beta/delta subunits family. MtnA subfamily.

It carries out the reaction 5-(methylsulfanyl)-alpha-D-ribose 1-phosphate = 5-(methylsulfanyl)-D-ribulose 1-phosphate. The protein operates within amino-acid biosynthesis; L-methionine biosynthesis via salvage pathway; L-methionine from S-methyl-5-thio-alpha-D-ribose 1-phosphate: step 1/6. In terms of biological role, catalyzes the interconversion of methylthioribose-1-phosphate (MTR-1-P) into methylthioribulose-1-phosphate (MTRu-1-P). This chain is Methylthioribose-1-phosphate isomerase (mtnA), found in Aquifex aeolicus (strain VF5).